A 300-amino-acid polypeptide reads, in one-letter code: Tyrosine recombinase XerC (300 aa).

One can recognise a Core-binding (CB) domain in the interval 1 to 86; sequence MESVLDAFDQ…AVKTFTAWAV (86 aa). Residues 107-294 enclose the Tyr recombinase domain; it reads TLPAVLRQDQ…TVARLRAVHD (188 aa). Active-site residues include Arg-151, Lys-175, His-246, Arg-249, and His-272. The active-site O-(3'-phospho-DNA)-tyrosine intermediate is the Tyr-281.

Belongs to the 'phage' integrase family. XerC subfamily. Forms a cyclic heterotetrameric complex composed of two molecules of XerC and two molecules of XerD.

The protein localises to the cytoplasm. Functionally, site-specific tyrosine recombinase, which acts by catalyzing the cutting and rejoining of the recombining DNA molecules. The XerC-XerD complex is essential to convert dimers of the bacterial chromosome into monomers to permit their segregation at cell division. It also contributes to the segregational stability of plasmids. The protein is Tyrosine recombinase XerC of Mycobacterium sp. (strain JLS).